A 134-amino-acid chain; its full sequence is Z-ring associated protein G (134 aa).

Residues 7 to 27 form a helical membrane-spanning segment; it reads EIWVAIGIAFIVGLFIGYIIV. Residues 107–134 are disordered; the sequence is ATDKSQNEQPRDYSEGASGLFKENKEEN. A compositionally biased stretch (basic and acidic residues) spans 111-120; the sequence is SQNEQPRDYS.

Belongs to the ZapG family.

The protein resides in the cell inner membrane. In terms of biological role, involved in cell division, cell envelope biogenesis and cell shape maintenance. In Haemophilus influenzae (strain ATCC 51907 / DSM 11121 / KW20 / Rd), this protein is Z-ring associated protein G.